A 741-amino-acid chain; its full sequence is 1,4-alpha-glucan branching enzyme GlgB (741 aa).

The active-site Nucleophile is Asp420. Glu473 (proton donor) is an active-site residue.

Belongs to the glycosyl hydrolase 13 family. GlgB subfamily. Monomer.

It carries out the reaction Transfers a segment of a (1-&gt;4)-alpha-D-glucan chain to a primary hydroxy group in a similar glucan chain.. It participates in glycan biosynthesis; glycogen biosynthesis. Catalyzes the formation of the alpha-1,6-glucosidic linkages in glycogen by scission of a 1,4-alpha-linked oligosaccharide from growing alpha-1,4-glucan chains and the subsequent attachment of the oligosaccharide to the alpha-1,6 position. This is 1,4-alpha-glucan branching enzyme GlgB from Pseudomonas syringae pv. syringae (strain B728a).